Consider the following 431-residue polypeptide: Enolase (431 aa).

(2R)-2-phosphoglycerate is bound at residue Gln163. Glu205 serves as the catalytic Proton donor. The Mg(2+) site is built by Asp242, Glu288, and Asp315. Residues Lys340, Arg369, Ser370, and Lys391 each coordinate (2R)-2-phosphoglycerate. The active-site Proton acceptor is the Lys340.

It belongs to the enolase family. Mg(2+) is required as a cofactor.

The protein localises to the cytoplasm. Its subcellular location is the secreted. The protein resides in the cell surface. It catalyses the reaction (2R)-2-phosphoglycerate = phosphoenolpyruvate + H2O. It participates in carbohydrate degradation; glycolysis; pyruvate from D-glyceraldehyde 3-phosphate: step 4/5. Its function is as follows. Catalyzes the reversible conversion of 2-phosphoglycerate (2-PG) into phosphoenolpyruvate (PEP). It is essential for the degradation of carbohydrates via glycolysis. This Trichlorobacter lovleyi (strain ATCC BAA-1151 / DSM 17278 / SZ) (Geobacter lovleyi) protein is Enolase.